The sequence spans 546 residues: 6'''-hydroxyparomomycin C oxidase (546 aa).

Residues 1 to 30 (MERLRGPSPLENTTARHPAPLGPAHRDGLE) are disordered. The Proton acceptor role is filled by histidine 475.

The protein belongs to the GMC oxidoreductase family. Requires FAD as cofactor.

It functions in the pathway antibiotic biosynthesis; lividomycin biosynthesis. Functionally, glucosaminyl-6'-oxidase involved in the biosynthetic pathway of lividomycin by mediating FAD-dependent dehydrogenation of 6'''-hydroxyparomomycin to paromomycin. This is 6'''-hydroxyparomomycin C oxidase (livQ) from Streptomyces lividus.